A 351-amino-acid chain; its full sequence is Phosphoribosylformylglycinamidine cyclo-ligase (351 aa).

This sequence belongs to the AIR synthase family.

Its subcellular location is the cytoplasm. The enzyme catalyses 2-formamido-N(1)-(5-O-phospho-beta-D-ribosyl)acetamidine + ATP = 5-amino-1-(5-phospho-beta-D-ribosyl)imidazole + ADP + phosphate + H(+). It functions in the pathway purine metabolism; IMP biosynthesis via de novo pathway; 5-amino-1-(5-phospho-D-ribosyl)imidazole from N(2)-formyl-N(1)-(5-phospho-D-ribosyl)glycinamide: step 2/2. The chain is Phosphoribosylformylglycinamidine cyclo-ligase from Burkholderia cenocepacia (strain HI2424).